A 478-amino-acid polypeptide reads, in one-letter code: D-ribulose kinase (478 aa).

The transit peptide at 1 to 38 directs the protein to the chloroplast; that stretch reads MLILRQFQISSFELFQSPKQTGFYSSSRSVPLPRTRFY. Residues aspartate 60, 64–67, and aspartate 278 contribute to the substrate site; that span reads SGGR. Residues serine 300, glycine 338, and 433-437 contribute to the ATP site; that span reads GGAKN.

The protein belongs to the FGGY kinase family. The cofactor is a divalent metal cation.

Its subcellular location is the plastid. The protein localises to the chloroplast. It catalyses the reaction D-ribulose + ATP = D-ribulose 5-phosphate + ADP + H(+). Exhibits ATP hydrolysis without substrate. Can phosphorylate D-ribulose with low efficiency. The polypeptide is D-ribulose kinase (Arabidopsis thaliana (Mouse-ear cress)).